The following is an 84-amino-acid chain: Translational regulator CsrA (84 aa).

The protein belongs to the CsrA/RsmA family. As to quaternary structure, homodimer; the beta-strands of each monomer intercalate to form a hydrophobic core, while the alpha-helices form wings that extend away from the core.

It localises to the cytoplasm. In terms of biological role, a translational regulator that binds mRNA to regulate translation initiation and/or mRNA stability. Usually binds in the 5'-UTR at or near the Shine-Dalgarno sequence preventing ribosome-binding, thus repressing translation. Its main target seems to be the major flagellin gene, while its function is anatagonized by FliW. This Leptospira interrogans serogroup Icterohaemorrhagiae serovar Lai (strain 56601) protein is Translational regulator CsrA.